The sequence spans 353 residues: Ig alpha-1 chain C region (353 aa).

Residues Pro-6–Thr-98 form the Ig-like 1 domain. 2 cysteine pairs are disulfide-bonded: Cys-26/Cys-85 and Cys-77/Cys-101. Positions Asp-96–Pro-121 are disordered. The segment covering Ser-105 to Pro-121 has biased composition (pro residues). 3 disulfide bridges follow: Cys-123/Cys-180, Cys-147/Cys-204, and Cys-250/Cys-313. 2 consecutive Ig-like domains span residues Pro-125–Ser-220 and Pro-228–Asp-330. Asn-144 is a glycosylation site (N-linked (GlcNAc...) asparagine). Asn-340 carries N-linked (GlcNAc...) asparagine glycosylation. Cys-352 is a 3-hydroxy-L-kynurenine binding site.

As to quaternary structure, monomeric or polymeric. In terms of processing, 3-Hydroxykynurenine, an oxidized tryptophan metabolite that is common in biological fluids, reacts with alpha-1-microglobulin to form heterogeneous polycyclic chromophores including hydroxanthommatin. The chromophore reacts with accessible cysteines forming non-reducible thioether cross-links with Ig alpha-1 chain C region Cys-352.

Its function is as follows. Ig alpha is the major immunoglobulin class in body secretions. It may serve both to defend against local infection and to prevent access of foreign antigens to the general immunologic system. This Gorilla gorilla gorilla (Western lowland gorilla) protein is Ig alpha-1 chain C region (IGHA1).